The sequence spans 391 residues: Formate-dependent phosphoribosylglycinamide formyltransferase (391 aa).

N(1)-(5-phospho-beta-D-ribosyl)glycinamide is bound by residues 20–21 (EL) and Glu80. ATP-binding positions include Arg112, Lys153, 158–163 (SSGKGQ), 193–196 (EGFI), and Glu201. The ATP-grasp domain occupies 117 to 306 (RLAAETLGLP…EFALHVRAIL (190 aa)). Residues Glu265 and Glu277 each coordinate Mg(2+). N(1)-(5-phospho-beta-D-ribosyl)glycinamide-binding positions include Asp284, Lys354, and 361-362 (RR).

The protein belongs to the PurK/PurT family. As to quaternary structure, homodimer.

It catalyses the reaction N(1)-(5-phospho-beta-D-ribosyl)glycinamide + formate + ATP = N(2)-formyl-N(1)-(5-phospho-beta-D-ribosyl)glycinamide + ADP + phosphate + H(+). The protein operates within purine metabolism; IMP biosynthesis via de novo pathway; N(2)-formyl-N(1)-(5-phospho-D-ribosyl)glycinamide from N(1)-(5-phospho-D-ribosyl)glycinamide (formate route): step 1/1. Involved in the de novo purine biosynthesis. Catalyzes the transfer of formate to 5-phospho-ribosyl-glycinamide (GAR), producing 5-phospho-ribosyl-N-formylglycinamide (FGAR). Formate is provided by PurU via hydrolysis of 10-formyl-tetrahydrofolate. This Shewanella oneidensis (strain ATCC 700550 / JCM 31522 / CIP 106686 / LMG 19005 / NCIMB 14063 / MR-1) protein is Formate-dependent phosphoribosylglycinamide formyltransferase.